The following is a 127-amino-acid chain: MLLLFLNSVGFIVPVLLAVALLTLIERKMLGYMHVRKGPNNVGPYGLLQPIADGFKLLIKETLKPSNASPYLFYSSPALFLFLAILLWSIIPVGESTLNFNLSLVLILGLSSLSVYSLLGSGWSSNS.

The next 3 helical transmembrane spans lie at 2-22 (LLLF…VALL), 71-91 (YLFY…WSII), and 100-120 (FNLS…SLLG).

The protein belongs to the complex I subunit 1 family.

The protein resides in the mitochondrion inner membrane. The enzyme catalyses a ubiquinone + NADH + 5 H(+)(in) = a ubiquinol + NAD(+) + 4 H(+)(out). In terms of biological role, core subunit of the mitochondrial membrane respiratory chain NADH dehydrogenase (Complex I) that is believed to belong to the minimal assembly required for catalysis. Complex I functions in the transfer of electrons from NADH to the respiratory chain. The immediate electron acceptor for the enzyme is believed to be ubiquinone. The chain is NADH-ubiquinone oxidoreductase chain 1 (ND1) from Asterias forbesi (Forbes' starfish).